Reading from the N-terminus, the 596-residue chain is Elongation factor 4 (596 aa).

The tr-type G domain occupies 2-184 (KHIRNFSIIA…MIVKDVPPPV (183 aa)). GTP is bound by residues 14–19 (DHGKST) and 131–134 (NKID).

It belongs to the TRAFAC class translation factor GTPase superfamily. Classic translation factor GTPase family. LepA subfamily.

It is found in the cell inner membrane. It carries out the reaction GTP + H2O = GDP + phosphate + H(+). Required for accurate and efficient protein synthesis under certain stress conditions. May act as a fidelity factor of the translation reaction, by catalyzing a one-codon backward translocation of tRNAs on improperly translocated ribosomes. Back-translocation proceeds from a post-translocation (POST) complex to a pre-translocation (PRE) complex, thus giving elongation factor G a second chance to translocate the tRNAs correctly. Binds to ribosomes in a GTP-dependent manner. In Pseudoalteromonas translucida (strain TAC 125), this protein is Elongation factor 4.